A 118-amino-acid chain; its full sequence is Small ribosomal subunit protein uS13 (118 aa).

The segment at 91–118 (HRRGLPVRGQRTRTNARTRKGPRRPIKK) is disordered.

This sequence belongs to the universal ribosomal protein uS13 family. In terms of assembly, part of the 30S ribosomal subunit. Forms a loose heterodimer with protein S19. Forms two bridges to the 50S subunit in the 70S ribosome.

Functionally, located at the top of the head of the 30S subunit, it contacts several helices of the 16S rRNA. In the 70S ribosome it contacts the 23S rRNA (bridge B1a) and protein L5 of the 50S subunit (bridge B1b), connecting the 2 subunits; these bridges are implicated in subunit movement. Contacts the tRNAs in the A and P-sites. This Methylococcus capsulatus (strain ATCC 33009 / NCIMB 11132 / Bath) protein is Small ribosomal subunit protein uS13.